We begin with the raw amino-acid sequence, 204 residues long: MIILDNSIQTKKRTDSLSKLITVNTLGPEGTSSEYAAKHFISNFTLLQGLNSKLSLHDTFESCIERTLQSPLEYTIVPHAYDGIKHFYMRPDLQLLQIFRCDTPMYGLAVRPDFEFRDDMLDTSVIVSHPSPINLIKYFTRKDVRFKLVNSTSQAARKVKEGLYDIALTNELARQKYGLTFVKTFKSIPMSWSLFGKGDVDDEN.

The protein belongs to the prephenate decarboxylase family.

Its subcellular location is the cytoplasm. It catalyses the reaction prephenate + H(+) = 3-[(4R)-4-hydroxycyclohexa-1,5-dien-1-yl]-2-oxopropanoate + CO2. Its pathway is antibiotic biosynthesis; bacilysin biosynthesis. Part of the bacABCDEF operon responsible for the biosynthesis of the nonribosomally synthesized dipeptide antibiotic bacilysin, composed of L-alanine and L-anticapsin. Bacilysin is an irreversible inactivator of the glutaminase domain of glucosamine synthetase. BacA is an unusual prephenate decarboxylase that avoids the typical aromatization of the cyclohexadienol ring of prephenate. BacA catalyzes the protonation of prephenate (1-carboxy-4-hydroxy-alpha-oxo-2,5-cyclohexadiene-1-propanoic acid) at C6 position, followed by a decarboxylation to produce the endocyclic-delta(4),delta(8)-7R-dihydro-hydroxyphenylpyruvate (en-H2HPP). En-H2HPP is able to undergo a slow nonenzymatic isomerization to produce the exocyclic-delta(3),delta(5)-dihydro-hydroxyphenylpyruvate (ex-H2HPP). BacA isomerizes only the pro-R double bond in prephenate. The protein is Prephenate decarboxylase of Bacillus subtilis (strain 168).